A 5142-amino-acid chain; its full sequence is Protein piccolo (5142 aa).

The span at 1 to 21 shows a compositional bias: low complexity; sequence MGNEASLEGEGLPEGLAAAAA. Disordered stretches follow at residues 1–154 and 177–583; these read MGNE…SMMP and DLIS…PSQG. 3 stretches are compositionally biased toward basic and acidic residues: residues 114-125, 136-150, and 188-202; these read RTTDTFRSEQKL, KESKSRTDLKEEHKS, and ETTKKQKVVQKEQGK. The segment covering 232-244 has biased composition (polar residues); that stretch reads QDGTPKSISSQQP. Pro residues-rich tracts occupy residues 298–317 and 352–371; these read LPSPSKPPIQQPTPGKPPAQ and PVQPPGTTKPPAQPLGPAKP. Residues 376-385 show a composition bias toward polar residues; the sequence is TGSEKPSSEQ. Residues 397 to 555 are 10 X 10 AA tandem approximate repeats of P-A-K-P-Q-P-Q-Q-P-X; that stretch reads VGKTPAQQPG…PAKPSAQQST (159 aa). Residues 467–493 are compositionally biased toward pro residues; it reads TKPPSQLPGPAKPPPQQPGPAKPPPQQ. The segment covering 494 to 506 has biased composition (low complexity); it reads PGSAKPPSQQPGS. The span at 507 to 522 shows a compositional bias: pro residues; it reads TKPPPQQPGPAKPSPQ. Positions 523–554 are enriched in low complexity; that stretch reads QPGSTKPPSQQPGSAKPSAQQPSPAKPSAQQS. A C4-type zinc finger spans residues 589–613; that stretch reads CPLCNTTELLLHVPEKANFNTCTEC. 2 disordered regions span residues 650–929 and 945–1058; these read LAPV…TVTG and LIST…PEST. The span at 673 to 683 shows a compositional bias: low complexity; the sequence is SKSSPQPQQTS. Basic and acidic residues-rich tracts occupy residues 684 to 702 and 743 to 755; these read PKKDAAPKQDLSKAPEPKK and EQDKAPVADDKPK. Polar residues predominate over residues 765–774; that stretch reads DLVSSSSATT. A compositionally biased stretch (basic and acidic residues) spans 841–857; that stretch reads KGQKQVDPVQKKEEPKK. Residues 873–882 are compositionally biased toward pro residues; sequence KGSPTPPGPR. The span at 889-927 shows a compositional bias: polar residues; that stretch reads VPTPQQSPKPQEQSRRFSLNLGSITDAPKSQPTTPQETV. Residues Ser906 and Ser918 each carry the phosphoserine modification. At Thr922 the chain carries Phosphothreonine. The segment covering 949-969 has biased composition (low complexity); the sequence is AGQPGPHSQSGPGAPMKQAPA. Composition is skewed to basic and acidic residues over residues 996–1012 and 1019–1034; these read VKKETKAPAAEKLEPKA and KRTETEKKPPPIKDSK. A C4-type zinc finger spans residues 1059–1082; it reads CPLCKTELNIGSKDPPNFNTCTEC. Disordered stretches follow at residues 1120-1163, 1183-1386, 1391-1410, and 1423-1868; these read GDIR…QEQE, EKIP…TDEK, GLKKDSFSQESSPSSPSDLA, and QAST…SDPE. Residues 1126-1139 are compositionally biased toward pro residues; sequence PPAPSGPKASPMPV. Composition is skewed to basic and acidic residues over residues 1193–1265, 1307–1318, and 1330–1347; these read QKQE…HDLL, PKEDDKTTKTIK, and DQVEPGKEKTEKEDDKSD. The span at 1348–1358 shows a compositional bias: low complexity; that stretch reads TSSSQQPKSPQ. Residues Ser1356, Ser1366, Ser1367, Ser1396, Ser1398, Ser1401, Ser1402, and Ser1405 each carry the phosphoserine modification. Residues 1359-1374 show a composition bias toward polar residues; the sequence is GLSDTGYSSDGISSSL. Residues 1398-1407 are compositionally biased toward low complexity; sequence SQESSPSSPS. Composition is skewed to basic and acidic residues over residues 1428-1451 and 1469-1510; these read ADEKSEKKTQPHEVSPEQPKDQEK and KESQ…REPY. Ser1516, Ser1517, Ser1519, Ser1522, Ser1546, Ser1549, Ser1570, and Ser1572 each carry phosphoserine. The span at 1564-1576 shows a compositional bias: acidic residues; it reads SADEDASGSEDDE. Thr1617 is subject to Phosphothreonine. Residues Ser1618, Ser1628, and Ser1640 each carry the phosphoserine modification. Residues 1631-1640 are compositionally biased toward acidic residues; that stretch reads DEDDEAFDES. A compositionally biased stretch (basic and acidic residues) spans 1641–1652; the sequence is PELKYRETKSQE. A compositionally biased stretch (polar residues) spans 1671–1689; that stretch reads ELNSTIADKYSAESSQKKT. The segment covering 1693-1703 has biased composition (acidic residues); that stretch reads FDEEPELEMES. Ser1703 carries the phosphoserine modification. At Thr1705 the chain carries Phosphothreonine. Phosphoserine occurs at positions 1707 and 1712. Residues 1715-1732 show a composition bias toward polar residues; sequence EGSSSLHASSFTPGTSPT. Residues 1772–1785 show a composition bias toward acidic residues; it reads DSSEEEELREEEEL. 2 positions are modified to phosphoserine: Ser1773 and Ser1774. Residues 1786–1799 show a composition bias toward basic and acidic residues; sequence LKEQEKQREIEQQQ. At Thr1825 the chain carries Phosphothreonine. Ser1831 is modified (phosphoserine). Over residues 1840–1855 the composition is skewed to basic and acidic residues; it reads EELRQAAEMEELHRSS. A phosphoserine mark is found at Ser1860, Ser1865, Ser1873, and Ser1894. 3 disordered regions span residues 2169–2192, 2365–2438, and 2504–2536; these read PSESATSVPPSDTPSLTSSVSSVC, ETFG…PTIL, and EPSKPPIAPKPVIPQLPTTTQKPTDIHPKPTGL. 2 stretches are compositionally biased toward low complexity: residues 2174–2192 and 2374–2387; these read TSVPPSDTPSLTSSVSSVC and SQLPSGSPSVSSLP. Pro residues-rich tracts occupy residues 2404–2433 and 2506–2517; these read QPPPPPPPPPPPPPPPPPPPPPPLPPPTSP and SKPPIAPKPVIP. Ser2562 bears the Phosphoserine mark. Thr3069 carries the phosphothreonine modification. Disordered stretches follow at residues 3407-3508 and 3558-3626; these read EKQP…DKTK and KTYK…LYSP. Basic and acidic residues predominate over residues 3432–3441; the sequence is DDPRSFKKIV. Residue Ser3443 is modified to Phosphoserine. Thr3447 and Thr3474 each carry phosphothreonine. The span at 3474–3483 shows a compositional bias: acidic residues; it reads TDDEDQDEWD. Positions 3574–3585 are enriched in polar residues; the sequence is DTQSPQYLSATS. Ser3577, Ser3585, Ser3615, Ser3619, Ser3625, Ser3628, Ser3631, Ser3652, Ser3678, Ser3680, and Ser3686 each carry phosphoserine. Disordered stretches follow at residues 3652-3746 and 3833-3908; these read SPQK…MGTV and YMSD…QQSH. Composition is skewed to polar residues over residues 3701–3716 and 3733–3745; these read EGYTTKGSQTMTSSGA and STGTQSTFSTMGT. The residue at position 3835 (Ser3835) is a Phosphoserine. A compositionally biased stretch (basic and acidic residues) spans 3845–3857; it reads TRIESQHGIERPR. The span at 3859–3908 shows a compositional bias: polar residues; the sequence is APQTEFSQFIPPQTQTESQLVPPTSPYTQYQYSSPALPTQAPTSYTQQSH. A phosphoserine mark is found at Ser4088 and Ser4204. The disordered stretch occupies residues 4278 to 4301; it reads EADKPYSSGSRSRPSSRPSSVYGL. The span at 4282–4301 shows a compositional bias: low complexity; it reads PYSSGSRSRPSSRPSSVYGL. Ser4358, Ser4362, Ser4365, Ser4394, and Ser4430 each carry phosphoserine. A disordered region spans residues 4389 to 4411; the sequence is RDQFGSSHSLPEVQQHMREESRT. The region spanning 4496–4590 is the PDZ domain; that stretch reads RIKITRDSKD…EAEICVRLDL (95 aa). Disordered regions lie at residues 4597–4618 and 4645–4690; these read ENSQHLELHEPPKAVDKAKSPG and EKGS…TKVV. Over residues 4598-4615 the composition is skewed to basic and acidic residues; the sequence is NSQHLELHEPPKAVDKAK. The segment covering 4652-4673 has biased composition (low complexity); that stretch reads SGPTSAGSSSVPSPGQPGSPSV. Residue Ser4664 is modified to Phosphoserine. One can recognise a C2 1 domain in the interval 4694 to 4823; it reads ITGEIQLQIN…SHLDNTPRWY (130 aa). Ca(2+) is bound by residues Asp4723 and Asp4729. Ser4778 is modified (phosphoserine). Ca(2+) is bound by residues Asp4793, Asp4795, Ser4798, and Asp4801. Disordered regions lie at residues 4830–4907 and 4930–4986; these read ESID…VTQT and PTKP…QNGQ. Low complexity-rich tracts occupy residues 4838–4853 and 4877–4887; these read HSSQSSQQSPKPSVIK and SSPGSSKSSSE. Polar residues predominate over residues 4895-4907; it reads PSRSQSKTSVTQT. Residues 4941 to 4965 show a composition bias toward low complexity; sequence SSVSTGSSGSSFGSGYSVDSEGSSS. A C2 2 domain is found at 5007 to 5132; the sequence is VMGEIKIALK…DLRKRIVNWH (126 aa).

Interacts with BSN, ERC2/CAST1, RIMS1 and UNC13A. Interacts (via C-terminus) with TRIO (via N-terminus). Interacts with CTBP1. Interacts with SIAH1; this interaction negatively regulates SIAH1 E3 ligase activity. Directly interacts with GIT1 and GIT2. It depends on Ca(2+) as a cofactor. Moderately expressed in the developing cerebral cortex.

The protein localises to the presynaptic active zone. In terms of biological role, scaffold protein of the presynaptic cytomatrix at the active zone (CAZ) which is the place in the synapse where neurotransmitter is released. After synthesis, participates in the formation of Golgi-derived membranous organelles termed Piccolo-Bassoon transport vesicles (PTVs) that are transported along axons to sites of nascent synaptic contacts. At the presynaptic active zone, regulates the spatial organization of synaptic vesicle cluster, the protein complexes that execute membrane fusion and compensatory endocytosis. Organizes as well the readily releasable pool of synaptic vesicles and safeguards a fraction of them to be not immediately available for action potential-induced release. Also functions in processes other than assembly such as the regulation of specific presynaptic protein ubiquitination by interacting with SIAH1 or the regulation of presynaptic autophagy. Also mediates synapse to nucleus communication leading to reconfiguration of gene expression by associating with the transcriptional corepressor CTBP1 and by subsequently reducing the size of its pool available for nuclear import. The protein is Protein piccolo of Homo sapiens (Human).